The primary structure comprises 283 residues: GTP cyclohydrolase MptA (283 aa).

The protein belongs to the GTP cyclohydrolase IV family. In terms of assembly, homodimer. Fe(2+) serves as cofactor.

The catalysed reaction is GTP + H2O = 7,8-dihydroneopterin 2',3'-cyclic phosphate + formate + diphosphate + H(+). It participates in cofactor biosynthesis; 5,6,7,8-tetrahydromethanopterin biosynthesis. Its function is as follows. Converts GTP to 7,8-dihydro-D-neopterin 2',3'-cyclic phosphate, the first intermediate in the biosynthesis of coenzyme methanopterin. This chain is GTP cyclohydrolase MptA, found in Aeropyrum pernix (strain ATCC 700893 / DSM 11879 / JCM 9820 / NBRC 100138 / K1).